The chain runs to 750 residues: Catalase-peroxidase (750 aa).

A cross-link (tryptophyl-tyrosyl-methioninium (Trp-Tyr) (with M-261)) is located at residues 112–235 (WHSAGTYRIG…LGAAHMGLIY (124 aa)). Residue His-113 is the Proton acceptor of the active site. The segment at residues 235–261 (YVNPEGHNGNPDPVEAASYIRETFGRM) is a cross-link (tryptophyl-tyrosyl-methioninium (Tyr-Met) (with W-112)). His-276 contributes to the heme b binding site.

Belongs to the peroxidase family. Peroxidase/catalase subfamily. Homodimer or homotetramer. Heme b is required as a cofactor. Formation of the three residue Trp-Tyr-Met cross-link is important for the catalase, but not the peroxidase activity of the enzyme.

The enzyme catalyses H2O2 + AH2 = A + 2 H2O. It catalyses the reaction 2 H2O2 = O2 + 2 H2O. In terms of biological role, bifunctional enzyme with both catalase and broad-spectrum peroxidase activity. The sequence is that of Catalase-peroxidase from Christiangramia forsetii (strain DSM 17595 / CGMCC 1.15422 / KT0803) (Gramella forsetii).